A 177-amino-acid chain; its full sequence is MSRVGKKPVTVPSGVTASVEGQTVKVKGPKGQLQFVVHDDVDVKLENGEVTVKPRYETNRARALYGTARAQVANLVEGVTKGFEKKLEITGVGYRATLQGKNLQLALGYSHDVVYTIPEGIAITVPKPTEINIVGIDSQVVGQVAAEIRSYRPPEPYKGKGVRYANEFIFRKEGKKK.

It belongs to the universal ribosomal protein uL6 family. Part of the 50S ribosomal subunit.

This protein binds to the 23S rRNA, and is important in its secondary structure. It is located near the subunit interface in the base of the L7/L12 stalk, and near the tRNA binding site of the peptidyltransferase center. The polypeptide is Large ribosomal subunit protein uL6 (Rhodopseudomonas palustris (strain BisA53)).